Reading from the N-terminus, the 284-residue chain is UPF0276 protein PA3283 (284 aa).

Belongs to the UPF0276 family.

In Pseudomonas aeruginosa (strain ATCC 15692 / DSM 22644 / CIP 104116 / JCM 14847 / LMG 12228 / 1C / PRS 101 / PAO1), this protein is UPF0276 protein PA3283.